The following is a 193-amino-acid chain: Ubiquitin-conjugating enzyme E2 E1 (193 aa).

The interval 1–45 (MSDDDSRASTSSSSSSSSNQQTEKEGSTPKKKESKVSMSKNSKLL) is disordered. N-acetylserine is present on Ser-2. A compositionally biased stretch (low complexity) spans 8 to 18 (ASTSSSSSSSS). The segment covering 22–35 (TEKEGSTPKKKESK) has biased composition (basic and acidic residues). Residues 36 to 45 (VSMSKNSKLL) are compositionally biased toward polar residues. Positions 47–193 (TSAKRIQKEL…ARQWTKRYAT (147 aa)) constitute a UBC core domain. The active-site Glycyl thioester intermediate is Cys-131. Lys-136 participates in a covalent cross-link: Glycyl lysine isopeptide (Lys-Gly) (interchain with G-Cter in ISG15).

It belongs to the ubiquitin-conjugating enzyme family. In terms of assembly, interacts with RNF14. In terms of processing, ISGylation suppresses ubiquitin E2 enzyme activity. Post-translationally, autoubiquitinated.

Its subcellular location is the nucleus. The catalysed reaction is S-ubiquitinyl-[E1 ubiquitin-activating enzyme]-L-cysteine + [E2 ubiquitin-conjugating enzyme]-L-cysteine = [E1 ubiquitin-activating enzyme]-L-cysteine + S-ubiquitinyl-[E2 ubiquitin-conjugating enzyme]-L-cysteine.. It carries out the reaction S-ubiquitinyl-[E1 ubiquitin-activating enzyme]-L-cysteine + [acceptor protein]-L-lysine = [E1 ubiquitin-activating enzyme]-L-cysteine + N(6)-monoubiquitinyl-[acceptor protein]-L-lysine.. The protein operates within protein modification; protein ubiquitination. In terms of biological role, accepts ubiquitin from the E1 complex and catalyzes its covalent attachment to other proteins. Catalyzes the covalent attachment of ISG15 to other proteins. Mediates the selective degradation of short-lived and abnormal proteins. In vitro also catalyzes 'Lys-48'-linked polyubiquitination. The polypeptide is Ubiquitin-conjugating enzyme E2 E1 (Ube2e1) (Mus musculus (Mouse)).